A 129-amino-acid chain; its full sequence is MPSQPNRELETFANPLPERDYTIRIRIPEFTCLCPKTGQPDFATLQLEYVPDQACVELKSLKLYIWSYRDQGAFHEAVTNQILDDLTAVCKPRFMRLTAEFNVRGGIYTTVAAEYRQPGWDAPKIVRLP.

Cys-34 functions as the Thioimide intermediate in the catalytic mechanism. Asp-41 functions as the Proton donor in the catalytic mechanism. Substrate contacts are provided by residues 56 to 58 (VEL) and 75 to 76 (HE).

Belongs to the GTP cyclohydrolase I family. QueF type 1 subfamily.

Its subcellular location is the cytoplasm. The catalysed reaction is 7-aminomethyl-7-carbaguanine + 2 NADP(+) = 7-cyano-7-deazaguanine + 2 NADPH + 3 H(+). Its pathway is tRNA modification; tRNA-queuosine biosynthesis. Functionally, catalyzes the NADPH-dependent reduction of 7-cyano-7-deazaguanine (preQ0) to 7-aminomethyl-7-deazaguanine (preQ1). In Nitrosococcus oceani (strain ATCC 19707 / BCRC 17464 / JCM 30415 / NCIMB 11848 / C-107), this protein is NADPH-dependent 7-cyano-7-deazaguanine reductase.